A 380-amino-acid chain; its full sequence is Protein-tyrosine sulfotransferase A (380 aa).

Over 1–6 (MRKNRE) the chain is Cytoplasmic. The helical; Signal-anchor for type II membrane protein transmembrane segment at 7–27 (LLLVLFLVVFILFYFITARTA) threads the bilayer. The Lumenal segment spans residues 28-380 (DDPYYSNHRE…PIVDNEVSKL (353 aa)). Residue asparagine 66 is glycosylated (N-linked (GlcNAc...) asparagine). 79–83 (RSGTT) contacts 3'-phosphoadenylyl sulfate. The cysteines at positions 97 and 157 are disulfide-linked. Glutamate 100 serves as the catalytic Proton donor/acceptor. Residues 102-106 (RVIPR) are interaction with peptide substrate. Arginine 184, serine 192, and arginine 196 together coordinate 3'-phosphoadenylyl sulfate. A disulfide bridge links cysteine 226 with cysteine 234. 3'-phosphoadenylyl sulfate contacts are provided by residues tyrosine 239, 284-293 (SSDQVVKPVN), and lysine 299.

Belongs to the protein sulfotransferase family.

The protein resides in the golgi apparatus membrane. The enzyme catalyses L-tyrosyl-[protein] + 3'-phosphoadenylyl sulfate = O-sulfo-L-tyrosine-[protein] + adenosine 3',5'-bisphosphate + H(+). Catalyzes the O-sulfation of tyrosine residues within acidic motifs of polypeptides, using 3'-phosphoadenylyl sulfate (PAPS) as cosubstrate. This is Protein-tyrosine sulfotransferase A (tpst-1) from Caenorhabditis elegans.